The following is a 310-amino-acid chain: Methionyl-tRNA formyltransferase (310 aa).

111-114 (SILP) contributes to the (6S)-5,6,7,8-tetrahydrofolate binding site.

The protein belongs to the Fmt family.

The enzyme catalyses L-methionyl-tRNA(fMet) + (6R)-10-formyltetrahydrofolate = N-formyl-L-methionyl-tRNA(fMet) + (6S)-5,6,7,8-tetrahydrofolate + H(+). Its function is as follows. Attaches a formyl group to the free amino group of methionyl-tRNA(fMet). The formyl group appears to play a dual role in the initiator identity of N-formylmethionyl-tRNA by promoting its recognition by IF2 and preventing the misappropriation of this tRNA by the elongation apparatus. This Methylobacterium nodulans (strain LMG 21967 / CNCM I-2342 / ORS 2060) protein is Methionyl-tRNA formyltransferase.